The primary structure comprises 137 residues: Cellular retinoic acid-binding protein 1 (137 aa).

A Nuclear localization signal motif is present at residues 21–31; that stretch reads KALGVNAMLRK. All-trans-retinoate is bound at residue 132–134; sequence RIY.

It belongs to the calycin superfamily. Fatty-acid binding protein (FABP) family.

The protein resides in the cytoplasm. Functionally, cytosolic CRABPs may regulate the access of retinoic acid to the nuclear retinoic acid receptors. This is Cellular retinoic acid-binding protein 1 (Crabp1) from Mus musculus (Mouse).